A 491-amino-acid polypeptide reads, in one-letter code: Mitochondrial distribution and morphology protein 12 (491 aa).

Residues 1-491 (MSIDLNWEAA…VFPSYWTFLV (491 aa)) enclose the SMP-LTD domain. The segment covering 72 to 82 (ESDSSEDEDGE) has biased composition (acidic residues). Disordered stretches follow at residues 72–123 (ESDS…NHHD), 201–313 (GWPD…MRER), and 389–434 (GDED…QPRR). 2 stretches are compositionally biased toward basic and acidic residues: residues 83-123 (GHDA…NHHD) and 213-229 (MTDHTTGRTRREDHNKN). Residues 230–249 (ETGSPSRPSTAHTNPTQLSH) are compositionally biased toward polar residues. Low complexity predominate over residues 252 to 262 (SAASSSNNTSN). Positions 270 to 279 (DHTSSTTATT) are enriched in polar residues. Residues 400–421 (STANTTTAASGSSTDNNNNNNE) are compositionally biased toward low complexity.

It belongs to the MDM12 family. As to quaternary structure, component of the ER-mitochondria encounter structure (ERMES) or MDM complex, composed of mmm1, mdm10, mdm12 and mdm34. A mmm1 homodimer associates with one molecule of mdm12 on each side in a pairwise head-to-tail manner, and the SMP-LTD domains of mmm1 and mdm12 generate a continuous hydrophobic tunnel for phospholipid trafficking.

Its subcellular location is the mitochondrion outer membrane. The protein localises to the endoplasmic reticulum membrane. In terms of biological role, component of the ERMES/MDM complex, which serves as a molecular tether to connect the endoplasmic reticulum (ER) and mitochondria. Components of this complex are involved in the control of mitochondrial shape and protein biogenesis, and function in nonvesicular lipid trafficking between the ER and mitochondria. Mdm12 is required for the interaction of the ER-resident membrane protein mmm1 and the outer mitochondrial membrane-resident beta-barrel protein mdm10. The mdm12-mmm1 subcomplex functions in the major beta-barrel assembly pathway that is responsible for biogenesis of all mitochondrial outer membrane beta-barrel proteins, and acts in a late step after the SAM complex. The mdm10-mdm12-mmm1 subcomplex further acts in the TOM40-specific pathway after the action of the mdm12-mmm1 complex. Essential for establishing and maintaining the structure of mitochondria and maintenance of mtDNA nucleoids. This Talaromyces stipitatus (strain ATCC 10500 / CBS 375.48 / QM 6759 / NRRL 1006) (Penicillium stipitatum) protein is Mitochondrial distribution and morphology protein 12.